The primary structure comprises 158 residues: SsrA-binding protein (158 aa).

It belongs to the SmpB family.

It is found in the cytoplasm. Its function is as follows. Required for rescue of stalled ribosomes mediated by trans-translation. Binds to transfer-messenger RNA (tmRNA), required for stable association of tmRNA with ribosomes. tmRNA and SmpB together mimic tRNA shape, replacing the anticodon stem-loop with SmpB. tmRNA is encoded by the ssrA gene; the 2 termini fold to resemble tRNA(Ala) and it encodes a 'tag peptide', a short internal open reading frame. During trans-translation Ala-aminoacylated tmRNA acts like a tRNA, entering the A-site of stalled ribosomes, displacing the stalled mRNA. The ribosome then switches to translate the ORF on the tmRNA; the nascent peptide is terminated with the 'tag peptide' encoded by the tmRNA and targeted for degradation. The ribosome is freed to recommence translation, which seems to be the essential function of trans-translation. The sequence is that of SsrA-binding protein from Buchnera aphidicola subsp. Baizongia pistaciae (strain Bp).